Reading from the N-terminus, the 575-residue chain is Cytokinin dehydrogenase 1 (575 aa).

A signal peptide spans 1–31; sequence MGLTSSLRFHRQNNKTFLGIFMILVLSCIPG. Asn-14, Asn-38, and Asn-115 each carry an N-linked (GlcNAc...) asparagine glycan. Residues 84–262 form the FAD-binding PCMH-type domain; the sequence is YQLPPLAILH…TRARISLEPA (179 aa). FAD-binding residues include Ala-120, Gly-122, and Gly-124. The residue at position 125 (His-125) is a Pros-8alpha-FAD histidine. FAD-binding residues include Ser-126, Gln-130, Asp-186, Thr-191, Ser-197, Ile-201, and Ile-252. Residues Asn-303, Asn-318, Asn-437, and Asn-467 are each glycosylated (N-linked (GlcNAc...) asparagine). FAD contacts are provided by Tyr-498 and Gln-536.

Belongs to the oxygen-dependent FAD-linked oxidoreductase family. It depends on FAD as a cofactor. In terms of tissue distribution, expressed in shoot apexes, lateral shoot meristems, growing tissues of young flowers, and weakly at the root-hypocotyl junction.

Its subcellular location is the vacuole. The enzyme catalyses N(6)-dimethylallyladenine + A + H2O = 3-methyl-2-butenal + adenine + AH2. In terms of biological role, catalyzes the oxidation of cytokinins, a family of N(6)-substituted adenine derivatives that are plant hormones, where the substituent is an isopentenyl group. Catalyzes in vitro the oxidation of various types of cytokinin nucleotides that are known as direct products of cytokinin biosynthesis. Promotes adventitious root initiation downstream of MYC2-dependent jasmonate signaling. Cytokinin degraded by CKX1 is required for cell division in the female gametophyte by modulating the expression of cell cycle genes. The polypeptide is Cytokinin dehydrogenase 1 (CKX1) (Arabidopsis thaliana (Mouse-ear cress)).